We begin with the raw amino-acid sequence, 306 residues long: Aspartate carbamoyltransferase catalytic subunit (306 aa).

Residues arginine 55 and threonine 56 each contribute to the carbamoyl phosphate site. Lysine 84 contacts L-aspartate. Carbamoyl phosphate is bound by residues arginine 105, histidine 133, and glutamine 136. Residues arginine 166 and arginine 227 each contribute to the L-aspartate site. Carbamoyl phosphate contacts are provided by leucine 265 and proline 266.

It belongs to the aspartate/ornithine carbamoyltransferase superfamily. ATCase family. As to quaternary structure, heterododecamer (2C3:3R2) of six catalytic PyrB chains organized as two trimers (C3), and six regulatory PyrI chains organized as three dimers (R2).

It carries out the reaction carbamoyl phosphate + L-aspartate = N-carbamoyl-L-aspartate + phosphate + H(+). Its pathway is pyrimidine metabolism; UMP biosynthesis via de novo pathway; (S)-dihydroorotate from bicarbonate: step 2/3. Its function is as follows. Catalyzes the condensation of carbamoyl phosphate and aspartate to form carbamoyl aspartate and inorganic phosphate, the committed step in the de novo pyrimidine nucleotide biosynthesis pathway. The sequence is that of Aspartate carbamoyltransferase catalytic subunit from Aeromonas salmonicida (strain A449).